A 326-amino-acid chain; its full sequence is DNA-directed RNA polymerase subunit alpha (326 aa).

The interval 1–232 is alpha N-terminal domain (alpha-NTD); sequence MQGSARDFLK…EQLSSFVELE (232 aa). The interval 246 to 326 is alpha C-terminal domain (alpha-CTD); it reads FDPQLLAAVD…NWPPVDLMSE (81 aa).

Belongs to the RNA polymerase alpha chain family. As to quaternary structure, homodimer. The RNAP catalytic core consists of 2 alpha, 1 beta, 1 beta' and 1 omega subunit. When a sigma factor is associated with the core the holoenzyme is formed, which can initiate transcription.

It catalyses the reaction RNA(n) + a ribonucleoside 5'-triphosphate = RNA(n+1) + diphosphate. Its function is as follows. DNA-dependent RNA polymerase catalyzes the transcription of DNA into RNA using the four ribonucleoside triphosphates as substrates. The protein is DNA-directed RNA polymerase subunit alpha of Vesicomyosocius okutanii subsp. Calyptogena okutanii (strain HA).